Reading from the N-terminus, the 476-residue chain is 2-(3-amino-3-carboxypropyl)histidine synthase subunit 2 (476 aa).

A compositionally biased stretch (polar residues) spans 1 to 15 (MTESAPSAFFTTSTP). The segment at 1–24 (MTESAPSAFFTTSTPADHVHEEES) is disordered. [4Fe-4S] cluster is bound by residues Cys102, Cys123, and Cys347. Residues 451–476 (DGVSTAEDSTKMGEGRSGIAQGYSGK) form a disordered region.

This sequence belongs to the DPH1/DPH2 family. DPH2 subfamily. As to quaternary structure, component of the 2-(3-amino-3-carboxypropyl)histidine synthase complex composed of dph-1, dph-2, dph-3 and a NADH-dependent reductase. It depends on [4Fe-4S] cluster as a cofactor.

The protein operates within protein modification; peptidyl-diphthamide biosynthesis. In terms of biological role, required for the first step of diphthamide biosynthesis, a post-translational modification of histidine which occurs in elongation factor 2. Dph-1 and dph-2 transfer a 3-amino-3-carboxypropyl (ACP) group from S-adenosyl-L-methionine (SAM) to a histidine residue, the reaction is assisted by a reduction system comprising dph-3 and a NADH-dependent reductase. Facilitates the reduction of the catalytic iron-sulfur cluster found in the dph-1 subunit. This is 2-(3-amino-3-carboxypropyl)histidine synthase subunit 2 (dph-2) from Caenorhabditis elegans.